Consider the following 636-residue polypeptide: Phosphomethylpyrimidine synthase (636 aa).

Residues D48 to P70 form a disordered region. Residues N231, M260, Y289, H325, S345–G347, D386–R389, and E425 each bind substrate. H429 contacts Zn(2+). Y452 lines the substrate pocket. H493 serves as a coordination point for Zn(2+). The [4Fe-4S] cluster site is built by C573, C576, and C581.

This sequence belongs to the ThiC family. In terms of assembly, homodimer. [4Fe-4S] cluster serves as cofactor.

It catalyses the reaction 5-amino-1-(5-phospho-beta-D-ribosyl)imidazole + S-adenosyl-L-methionine = 4-amino-2-methyl-5-(phosphooxymethyl)pyrimidine + CO + 5'-deoxyadenosine + formate + L-methionine + 3 H(+). The protein operates within cofactor biosynthesis; thiamine diphosphate biosynthesis. Functionally, catalyzes the synthesis of the hydroxymethylpyrimidine phosphate (HMP-P) moiety of thiamine from aminoimidazole ribotide (AIR) in a radical S-adenosyl-L-methionine (SAM)-dependent reaction. The polypeptide is Phosphomethylpyrimidine synthase (Cellvibrio japonicus (strain Ueda107) (Pseudomonas fluorescens subsp. cellulosa)).